Reading from the N-terminus, the 844-residue chain is Meiotically up-regulated gene 61 protein (844 aa).

Disordered stretches follow at residues E333–Q354 and N384–S415. Residues N384–T394 are compositionally biased toward polar residues. Positions P395–D407 are enriched in basic and acidic residues. Residues V459–W479 form a helical membrane-spanning segment. A605 to S612 serves as a coordination point for ATP. Residues V705 to V725 traverse the membrane as a helical segment.

Interacts with sad1.

Its subcellular location is the endoplasmic reticulum membrane. The protein localises to the nucleus membrane. In terms of biological role, required for correct meiotic chromosome segregation. The polypeptide is Meiotically up-regulated gene 61 protein (mug61) (Schizosaccharomyces pombe (strain 972 / ATCC 24843) (Fission yeast)).